Consider the following 684-residue polypeptide: Beta-taxilin (684 aa).

Positions 1–26 are enriched in polar residues; the sequence is MEANHSEQLSAERQSTPPGDSSSLPS. The tract at residues 1–132 is disordered; that stretch reads MEANHSEQLS…KEPVSNKEQK (132 aa). The segment covering 45 to 64 has biased composition (basic and acidic residues); it reads PEKEASVHPDISEELNRQLE. Positions 93-107 are enriched in acidic residues; sequence ESPDNEDGDCEETTE. Coiled coils occupy residues 135 to 351 and 378 to 467; these read KKIL…VLKE and NEVF…SEKD. Over residues 458 to 475 the composition is skewed to basic and acidic residues; it reads IRDAEISEKDDQSQHNSD. Disordered regions lie at residues 458–485, 514–632, and 646–684; these read IRDAEISEKDDQSQHNSDEEPESNVSVD, ESTP…DVPA, and PACEPSRQPPRAAAEELPVGASAGPQPRNVADTNLEGVD. A phosphoserine mark is found at Ser-474 and Ser-483. A compositionally biased stretch (basic and acidic residues) spans 514 to 524; that stretch reads ESTPHQSKETQ. The span at 613-622 shows a compositional bias: polar residues; the sequence is QAPQAPTEAS.

This sequence belongs to the taxilin family. In terms of assembly, binds to the C-terminal coiled coil region of syntaxin family members STX1A, STX3A and STX4A. Has a preference for STX1A. In terms of tissue distribution, expressed in skeletal muscle.

Functionally, promotes motor nerve regeneration. May be involved in intracellular vesicle traffic. In Homo sapiens (Human), this protein is Beta-taxilin (TXLNB).